The primary structure comprises 436 residues: Ribulose bisphosphate carboxylase large chain (436 aa).

Position 4 is an N6,N6,N6-trimethyllysine (Lys4). Asn113 and Thr163 together coordinate substrate. The active-site Proton acceptor is the Lys165. Residue Lys167 participates in substrate binding. 3 residues coordinate Mg(2+): Lys191, Asp193, and Glu194. An N6-carboxylysine modification is found at Lys191. Residue His284 is the Proton acceptor of the active site. Positions 285, 317, and 369 each coordinate substrate.

The protein belongs to the RuBisCO large chain family. Type I subfamily. Heterohexadecamer of 8 large chains and 8 small chains; disulfide-linked. The disulfide link is formed within the large subunit homodimers. Requires Mg(2+) as cofactor. In terms of processing, the disulfide bond which can form in the large chain dimeric partners within the hexadecamer appears to be associated with oxidative stress and protein turnover.

It is found in the plastid. The protein resides in the chloroplast. It carries out the reaction 2 (2R)-3-phosphoglycerate + 2 H(+) = D-ribulose 1,5-bisphosphate + CO2 + H2O. The enzyme catalyses D-ribulose 1,5-bisphosphate + O2 = 2-phosphoglycolate + (2R)-3-phosphoglycerate + 2 H(+). Functionally, ruBisCO catalyzes two reactions: the carboxylation of D-ribulose 1,5-bisphosphate, the primary event in carbon dioxide fixation, as well as the oxidative fragmentation of the pentose substrate in the photorespiration process. Both reactions occur simultaneously and in competition at the same active site. This Sanguinaria canadensis (Bloodroot) protein is Ribulose bisphosphate carboxylase large chain.